Reading from the N-terminus, the 142-residue chain is Large ribosomal subunit protein uL13 (142 aa).

This sequence belongs to the universal ribosomal protein uL13 family. Part of the 50S ribosomal subunit.

Functionally, this protein is one of the early assembly proteins of the 50S ribosomal subunit, although it is not seen to bind rRNA by itself. It is important during the early stages of 50S assembly. This Ralstonia nicotianae (strain ATCC BAA-1114 / GMI1000) (Ralstonia solanacearum) protein is Large ribosomal subunit protein uL13.